The chain runs to 437 residues: Histidinol dehydrogenase (437 aa).

The NAD(+) site is built by tyrosine 133, glutamine 191, and asparagine 214. Residues serine 240, glutamine 262, and histidine 265 each contribute to the substrate site. Residues glutamine 262 and histidine 265 each coordinate Zn(2+). Residues glutamate 329 and histidine 330 each act as proton acceptor in the active site. Residues histidine 330, aspartate 363, glutamate 417, and histidine 422 each coordinate substrate. Zn(2+) is bound at residue aspartate 363. Histidine 422 contributes to the Zn(2+) binding site.

It belongs to the histidinol dehydrogenase family. As to quaternary structure, homodimer. Zn(2+) is required as a cofactor.

The enzyme catalyses L-histidinol + 2 NAD(+) + H2O = L-histidine + 2 NADH + 3 H(+). The protein operates within amino-acid biosynthesis; L-histidine biosynthesis; L-histidine from 5-phospho-alpha-D-ribose 1-diphosphate: step 9/9. Functionally, catalyzes the sequential NAD-dependent oxidations of L-histidinol to L-histidinaldehyde and then to L-histidine. This chain is Histidinol dehydrogenase, found in Blochmanniella floridana.